The sequence spans 201 residues: Imidazole glycerol phosphate synthase subunit HisH 1 (201 aa).

The Glutamine amidotransferase type-1 domain occupies 1–201 (MIALIDYKAG…LKLLENFARL (201 aa)). The active-site Nucleophile is the Cys80. Residues His183 and Glu185 contribute to the active site.

As to quaternary structure, heterodimer of HisH and HisF.

It is found in the cytoplasm. The catalysed reaction is 5-[(5-phospho-1-deoxy-D-ribulos-1-ylimino)methylamino]-1-(5-phospho-beta-D-ribosyl)imidazole-4-carboxamide + L-glutamine = D-erythro-1-(imidazol-4-yl)glycerol 3-phosphate + 5-amino-1-(5-phospho-beta-D-ribosyl)imidazole-4-carboxamide + L-glutamate + H(+). It catalyses the reaction L-glutamine + H2O = L-glutamate + NH4(+). Its pathway is amino-acid biosynthesis; L-histidine biosynthesis; L-histidine from 5-phospho-alpha-D-ribose 1-diphosphate: step 5/9. In terms of biological role, IGPS catalyzes the conversion of PRFAR and glutamine to IGP, AICAR and glutamate. The HisH subunit provides the glutamine amidotransferase activity that produces the ammonia necessary to HisF for the synthesis of IGP and AICAR. This chain is Imidazole glycerol phosphate synthase subunit HisH 1 (hisH1), found in Campylobacter jejuni subsp. jejuni serotype O:23/36 (strain 81-176).